The chain runs to 440 residues: Beta-1,3-galactosyl-O-glycosyl-glycoprotein beta-1,6-N-acetylglucosaminyltransferase 3 (440 aa).

The Cytoplasmic segment spans residues 1 to 12 (MKMTGWKKKLCR). A helical; Signal-anchor for type II membrane protein membrane pass occupies residues 13–30 (GHHLWALGCYSLLAVVAL). At 31–440 (RLSLRLKCDV…RHKAIYGTEL (410 aa)) the chain is on the lumenal side. 4 disulfides stabilise this stretch: Cys-73-Cys-230, Cys-164-Cys-384, Cys-185-Cys-212, and Cys-393-Cys-425. The N-linked (GlcNAc...) asparagine glycan is linked to Asn-108.

It belongs to the glycosyltransferase 14 family. Post-translationally, N-glycosylated.

It is found in the golgi apparatus membrane. It carries out the reaction a 3-O-[beta-D-galactosyl-(1-&gt;3)-N-acetyl-alpha-D-galactosaminyl]-L-seryl-[protein] + UDP-N-acetyl-alpha-D-glucosamine = 3-O-{beta-D-galactosyl-(1-&gt;3)-[N-acetyl-beta-D-glucosaminyl-(1-&gt;6)]-N-acetyl-alpha-D-galactosaminyl}-L-seryl-[protein] + UDP + H(+). The enzyme catalyses a 3-O-[beta-D-galactosyl-(1-&gt;3)-N-acetyl-alpha-D-galactosaminyl]-L-threonyl-[protein] + UDP-N-acetyl-alpha-D-glucosamine = a 3-O-{beta-D-galactosyl-(1-&gt;3)-[N-acetyl-beta-D-glucosaminyl-(1-&gt;6)]-N-acetyl-alpha-D-galactosaminyl}-L-threonyl-[protein] + UDP + H(+). It catalyses the reaction a beta-D-Gal-(1-&gt;4)-beta-D-GlcNAc-(1-&gt;3)-beta-D-Gal-(1-&gt;4)-beta-D-GlcNAc derivative + UDP-N-acetyl-alpha-D-glucosamine = a beta-D-Gal-(1-&gt;4)-beta-D-GlcNAc-(1-&gt;3)-[beta-D-GlcNAc-(1-&gt;6)]-beta-D-Gal-(1-&gt;4)-N-acetyl-beta-D-glucosaminyl derivative + UDP + H(+). The catalysed reaction is 3-O-[N-acetyl-beta-D-glucosaminyl-(1-&gt;3)-N-acetyl-alpha-D-galactosaminyl]-L-seryl-[protein] + UDP-N-acetyl-alpha-D-glucosamine = 3-O-[N-acetyl-beta-D-glucosaminyl-(1-&gt;3)-[N-acetyl-beta-D-glucosaminyl-(1-&gt;6)]-N-acetyl-alpha-D-galactosaminyl]-L-seryl-[protein] + UDP + H(+). It carries out the reaction a 3-O-[N-acetyl-beta-D-glucosaminyl-(1-&gt;3)-N-acetyl-alpha-D-galactosaminyl]-L-threonyl-[protein] + UDP-N-acetyl-alpha-D-glucosamine = 3-O-[N-acetyl-beta-D-glucosaminyl-(1-&gt;3)-[N-acetyl-beta-D-glucosaminyl-(1-&gt;6)]-N-acetyl-alpha-D-galactosaminyl]-L-threonyl-[protein] + UDP + H(+). The protein operates within protein modification; protein glycosylation. In terms of biological role, glycosyltransferase that can synthesize all known mucin beta 6 N-acetylglucosaminides. Mediates core 2 and core 4 O-glycan branching, 2 important steps in mucin-type biosynthesis. Also has I-branching enzyme activity by converting linear into branched poly-N-acetyllactosaminoglycans, leading to introduce the blood group I antigen during embryonic development. The chain is Beta-1,3-galactosyl-O-glycosyl-glycoprotein beta-1,6-N-acetylglucosaminyltransferase 3 (GCNT3) from Bos mutus grunniens (Wild yak).